A 340-amino-acid polypeptide reads, in one-letter code: Phenylalanine--tRNA ligase alpha subunit (340 aa).

Glu258 contributes to the Mg(2+) binding site.

This sequence belongs to the class-II aminoacyl-tRNA synthetase family. Phe-tRNA synthetase alpha subunit type 1 subfamily. In terms of assembly, tetramer of two alpha and two beta subunits. Mg(2+) serves as cofactor.

It is found in the cytoplasm. The enzyme catalyses tRNA(Phe) + L-phenylalanine + ATP = L-phenylalanyl-tRNA(Phe) + AMP + diphosphate + H(+). This chain is Phenylalanine--tRNA ligase alpha subunit, found in Corynebacterium efficiens (strain DSM 44549 / YS-314 / AJ 12310 / JCM 11189 / NBRC 100395).